The primary structure comprises 112 residues: MLPYISWNTQRAPLRLRHLRHVRLRAHPPHAMGSPTQPIRARACRPRMAAGARLARMQDRLLRRAPAARGLYRGRRPPGRDAARPTTAILFAQGRPPLLDQRAPTRRGSHQR.

Residues 70 to 112 (GLYRGRRPPGRDAARPTTAILFAQGRPPLLDQRAPTRRGSHQR) form a disordered region.

This is an uncharacterized protein from Homo sapiens (Human).